The chain runs to 437 residues: Adenylosuccinate lyase (437 aa).

N(6)-(1,2-dicarboxyethyl)-AMP-binding positions include 4–5 (RY), 70–72 (KHD), and 96–97 (TS). Catalysis depends on H144, which acts as the Proton donor/acceptor. Residue Q215 participates in N(6)-(1,2-dicarboxyethyl)-AMP binding. S265 (proton donor/acceptor) is an active-site residue. N(6)-(1,2-dicarboxyethyl)-AMP contacts are provided by residues S266, 271–273 (KKN), and 310–314 (SVERV).

It belongs to the lyase 1 family. Adenylosuccinate lyase subfamily. In terms of assembly, homooligomer. Residues from neighboring subunits contribute catalytic and substrate-binding residues to each active site.

The enzyme catalyses N(6)-(1,2-dicarboxyethyl)-AMP = fumarate + AMP. It carries out the reaction (2S)-2-[5-amino-1-(5-phospho-beta-D-ribosyl)imidazole-4-carboxamido]succinate = 5-amino-1-(5-phospho-beta-D-ribosyl)imidazole-4-carboxamide + fumarate. Its pathway is purine metabolism; AMP biosynthesis via de novo pathway; AMP from IMP: step 2/2. It participates in purine metabolism; IMP biosynthesis via de novo pathway; 5-amino-1-(5-phospho-D-ribosyl)imidazole-4-carboxamide from 5-amino-1-(5-phospho-D-ribosyl)imidazole-4-carboxylate: step 2/2. Its function is as follows. Catalyzes two reactions in de novo purine nucleotide biosynthesis. Catalyzes the breakdown of 5-aminoimidazole- (N-succinylocarboxamide) ribotide (SAICAR or 2-[5-amino-1-(5-phospho-beta-D-ribosyl)imidazole-4-carboxamido]succinate) to 5-aminoimidazole-4-carboxamide ribotide (AICAR or 5-amino-1-(5-phospho-beta-D-ribosyl)imidazole-4-carboxamide) and fumarate, and of adenylosuccinate (ADS or N(6)-(1,2-dicarboxyethyl)-AMP) to adenosine monophosphate (AMP) and fumarate. In Aquifex aeolicus (strain VF5), this protein is Adenylosuccinate lyase (purB).